A 229-amino-acid polypeptide reads, in one-letter code: Peptidase E (229 aa).

Residues Ser120, Asp135, and His157 each act as charge relay system in the active site.

Belongs to the peptidase S51 family.

The protein localises to the cytoplasm. The enzyme catalyses Dipeptidase E catalyzes the hydrolysis of dipeptides Asp-|-Xaa. It does not act on peptides with N-terminal Glu, Asn or Gln, nor does it cleave isoaspartyl peptides.. Its function is as follows. Hydrolyzes dipeptides containing N-terminal aspartate residues. May play a role in allowing the cell to use peptide aspartate to spare carbon otherwise required for the synthesis of the aspartate family of amino acids. In Salmonella paratyphi A (strain AKU_12601), this protein is Peptidase E.